The sequence spans 66 residues: Sodium channel neurotoxin MeuNaTxalpha-7 (66 aa).

The LCN-type CS-alpha/beta domain occupies 2-64 (RDGYIADDKN…VPIKVSGKCN (63 aa)). Cystine bridges form between cysteine 12–cysteine 63, cysteine 16–cysteine 36, cysteine 22–cysteine 46, and cysteine 26–cysteine 48. Asparagine 64 is subject to Asparagine amide.

It belongs to the long (4 C-C) scorpion toxin superfamily. Sodium channel inhibitor family. Alpha subfamily. As to expression, expressed by the venom gland.

Its subcellular location is the secreted. Its function is as follows. Alpha toxins bind voltage-independently at site-3 of sodium channels (Nav) and inhibit the inactivation of the activated channels, thereby blocking neuronal transmission. The polypeptide is Sodium channel neurotoxin MeuNaTxalpha-7 (Mesobuthus eupeus (Lesser Asian scorpion)).